Consider the following 490-residue polypeptide: Adenylosuccinate lyase (490 aa).

A2 carries the N-acetylalanine modification. Substrate contacts are provided by residues 26–27, 91–93, and 117–118; these read RY, RHD, and TS. Position 153 is an N6-acetyllysine (K153). The active-site Proton donor/acceptor is H165. Q247 is a binding site for substrate. S295 serves as the catalytic Proton donor/acceptor. The residue at position 301 (K301) is an N6-acetyllysine. Substrate-binding residues include R309, R335, S340, and R344. K421 is covalently cross-linked (Glycyl lysine isopeptide (Lys-Gly) (interchain with G-Cter in SUMO1)).

Belongs to the lyase 1 family. Adenylosuccinate lyase subfamily. As to quaternary structure, homotetramer. Residues from neighboring subunits contribute catalytic and substrate-binding residues to each active site.

The enzyme catalyses N(6)-(1,2-dicarboxyethyl)-AMP = fumarate + AMP. The catalysed reaction is (2S)-2-[5-amino-1-(5-phospho-beta-D-ribosyl)imidazole-4-carboxamido]succinate = 5-amino-1-(5-phospho-beta-D-ribosyl)imidazole-4-carboxamide + fumarate. It functions in the pathway purine metabolism; AMP biosynthesis via de novo pathway; AMP from IMP: step 2/2. Its pathway is purine metabolism; IMP biosynthesis via de novo pathway; 5-amino-1-(5-phospho-D-ribosyl)imidazole-4-carboxamide from 5-amino-1-(5-phospho-D-ribosyl)imidazole-4-carboxylate: step 2/2. Functionally, catalyzes two non-sequential steps in de novo AMP synthesis: converts (S)-2-(5-amino-1-(5-phospho-D-ribosyl)imidazole-4-carboxamido)succinate (SAICAR) to fumarate plus 5-amino-1-(5-phospho-D-ribosyl)imidazole-4-carboxamide, and thereby also contributes to de novo IMP synthesis, and converts succinyladenosine monophosphate (SAMP) to AMP and fumarate. The chain is Adenylosuccinate lyase (ADSL) from Bos taurus (Bovine).